Consider the following 304-residue polypeptide: N-acetyl-D-glucosamine kinase (304 aa).

Residues 4–11 (GFDMGGTK) and 133–140 (GLGGGLVI) contribute to the ATP site. Residues His157, Cys177, Cys179, and Cys184 each contribute to the Zn(2+) site.

This sequence belongs to the ROK (NagC/XylR) family. NagK subfamily.

It catalyses the reaction N-acetyl-D-glucosamine + ATP = N-acetyl-D-glucosamine 6-phosphate + ADP + H(+). It participates in cell wall biogenesis; peptidoglycan recycling. Functionally, catalyzes the phosphorylation of N-acetyl-D-glucosamine (GlcNAc) derived from cell-wall degradation, yielding GlcNAc-6-P. This Pectobacterium carotovorum subsp. carotovorum (strain PC1) protein is N-acetyl-D-glucosamine kinase.